A 432-amino-acid chain; its full sequence is MLDIKQIRQQPDWFKEKLATRGVQPEEIDTVLELDAKRRELLQQTETLKAKRNEASKKIGEAKRAKQSADEAIAEMRQVGEDIKALDEQVEANDKDLFDKLAHLPNVPHEGVPVSLTEDGAEELRKVGQARQFDFEPKHHWEIGENLGILDFERAGKVSGSRFVYYVGLGAQLERALYNFMLDEHMKEGYTEVLPPYIVNAHAMYGTGQFPKFKQDVYQVNGEDMTLIPTAEVPLTNYFAGEVIPAEKLPVYVTALTPSFRSEAGSAGRDTRGLIRMHQFNKVEMVKYTKQDQSWEELDKMTANAENILQKLGLPYHVITLTTSDMSFTASETHDLELWMPAQNKYREVSSCSNCLDFQARRLHMQYRDENGKLQYVHTLNGSGLAVGRTLAAILENYQNEDGSVTIPEVLVPYFHGITKITKENAVPFNNK.

230-232 (TAE) is an L-serine binding site. 261 to 263 (RSE) lines the ATP pocket. Residue Glu-284 participates in L-serine binding. An ATP-binding site is contributed by 348–351 (EVSS). Ser-383 serves as a coordination point for L-serine.

Belongs to the class-II aminoacyl-tRNA synthetase family. Type-1 seryl-tRNA synthetase subfamily. Homodimer. The tRNA molecule binds across the dimer.

The protein localises to the cytoplasm. The enzyme catalyses tRNA(Ser) + L-serine + ATP = L-seryl-tRNA(Ser) + AMP + diphosphate + H(+). It catalyses the reaction tRNA(Sec) + L-serine + ATP = L-seryl-tRNA(Sec) + AMP + diphosphate + H(+). It functions in the pathway aminoacyl-tRNA biosynthesis; selenocysteinyl-tRNA(Sec) biosynthesis; L-seryl-tRNA(Sec) from L-serine and tRNA(Sec): step 1/1. Its function is as follows. Catalyzes the attachment of serine to tRNA(Ser). Is also able to aminoacylate tRNA(Sec) with serine, to form the misacylated tRNA L-seryl-tRNA(Sec), which will be further converted into selenocysteinyl-tRNA(Sec). This Limosilactobacillus fermentum (strain NBRC 3956 / LMG 18251) (Lactobacillus fermentum) protein is Serine--tRNA ligase.